The following is a 135-amino-acid chain: Large ribosomal subunit protein uL16c (135 aa).

Belongs to the universal ribosomal protein uL16 family. As to quaternary structure, part of the 50S ribosomal subunit.

The protein localises to the plastid. It is found in the chloroplast. This Nandina domestica (Heavenly bamboo) protein is Large ribosomal subunit protein uL16c.